The chain runs to 97 residues: Alpha-latrotoxin associated low molecular weight protein 2 (97 aa).

The signal sequence occupies residues 1–19; it reads MFKLICIVFIATILSITSA. 3 disulfides stabilise this stretch: Cys36–Cys72, Cys52–Cys68, and Cys55–Cys81.

The protein belongs to the arthropod CHH/MIH/GIH/VIH hormone family. Expressed by the venom gland.

It is found in the secreted. Its function is as follows. May increase the toxicity of alpha-latrotoxin and/or other venom components. Is non-toxic to mice and to the cockroach Periplaneta americana. This is Alpha-latrotoxin associated low molecular weight protein 2 from Steatoda grossa (False black widow).